A 227-amino-acid chain; its full sequence is H-2 class II histocompatibility antigen, A-U alpha chain (227 aa).

The tract at residues 1–82 (DHVGSYGIVV…KRSNSTPATN (82 aa)) is alpha-1. Residues 1-189 (DHVGSYGIVV…IPAPMSELTE (189 aa)) are Extracellular-facing. The tract at residues 83–176 (EAPQATVFPK…GLEEPVLKHW (94 aa)) is alpha-2. In terms of domain architecture, Ig-like C1-type spans 85 to 177 (PQATVFPKSP…LEEPVLKHWE (93 aa)). The cysteines at positions 105 and 161 are disulfide-linked. N-linked (GlcNAc...) asparagine glycosylation occurs at asparagine 116. The segment at 177–189 (EPEIPAPMSELTE) is connecting peptide. The helical transmembrane segment at 190-215 (TVVCALGLSVGLVGIVVGTIFIIQGL) threads the bilayer. At 216 to 227 (RSGGTSRHPGPL) the chain is on the cytoplasmic side.

This sequence belongs to the MHC class II family.

It localises to the membrane. The polypeptide is H-2 class II histocompatibility antigen, A-U alpha chain (H2-Aa) (Mus musculus (Mouse)).